The primary structure comprises 61 residues: uncharacterized protein (61 aa).

A coiled-coil region spans residues 34–61 (TDVEDIDRLISMLDDLEAKYERFKKDWE).

This is an uncharacterized protein from Bacillus subtilis (strain 168).